A 1237-amino-acid polypeptide reads, in one-letter code: GTPase activating protein BUD2 (1237 aa).

The segment covering 79–110 (GSGKSSISQPPPTTSTRRNLLRKSSNLNSSDQ) has biased composition (low complexity). The disordered stretch occupies residues 79 to 124 (GSGKSSISQPPPTTSTRRNLLRKSSNLNSSDQSHSKSSEDNEHQPP). Over residues 111–121 (SHSKSSEDNEH) the composition is skewed to basic and acidic residues. Positions 381-503 (NVEHPQLYDF…KQIKTTSTIM (123 aa)) constitute a C2 domain. The region spanning 637–905 (NSQDQAVSNS…PEIYDYFDKL (269 aa)) is the Ras-GAP domain. Disordered regions lie at residues 721–762 (SIHE…ERER) and 969–1007 (NNNG…PDLD). A compositionally biased stretch (acidic residues) spans 735–754 (DVSDDDDDDDDNSSDDDADY). Residues 986–996 (RDMEREQDRSR) show a composition bias toward basic and acidic residues. Residues 1065 to 1093 (NITLKDIQKQSTKIMNKIQELEIYLENYE) adopt a coiled-coil conformation. Positions 1170 to 1204 (NGGMGNRNGHDVNGHNNNNNNNNNNTGDGYNETDR) are disordered. A compositionally biased stretch (low complexity) spans 1183-1199 (GHNNNNNNNNNNTGDGY).

It localises to the cytoplasm. It is found in the cell cortex. Its subcellular location is the cell tip. The protein localises to the cell septum. Functionally, GTPase activating protein (GAP) for RSR1 which is involved in the polarization of yeast and hyphal cells. Directs the site of new daughter cell growth in yeast and hyphal cells. Important for hyphae to maintain linear growth and necessary for hyphal responses to directional cues in the environment (tropisms). Required for correct localization of the septin rings and stabilization of the polarisome at hyphal tips. Involved in cell adhesion. This Candida albicans (strain SC5314 / ATCC MYA-2876) (Yeast) protein is GTPase activating protein BUD2 (BUD2).